Reading from the N-terminus, the 366-residue chain is Rab9 effector protein with kelch motifs (366 aa).

Kelch repeat units lie at residues 49–95, 100–146, 151–200, 204–253, 254–303, and 343–366; these read KILI…FISA, NIWV…TSSA, KLYV…VLTA, KLFV…AWKS, YIYI…LLPW, and LCFI…TILQ.

In terms of biological role, rab9 effector required for endosome to trans-Golgi network (TGN) transport. The polypeptide is Rab9 effector protein with kelch motifs (rabepk) (Xenopus laevis (African clawed frog)).